A 305-amino-acid polypeptide reads, in one-letter code: MADINAYEGPAEAGFGDYVALLKPRVMSLVVFTAFVGLWIAPQPVNPFVAFCAVLFIALGGGASGALNMWYDADIDAVMRRTAGRPVPSGRVTSQEALAVGIALSGLSVMMLGLAANWFAAGFLAFTIFFYAVVYTIWLKRSTPQNIVIGGAAGAFPPMIGWACATGGIGIESLLMFALIFFWTPPHFWALALFMKDDYSKAGVPMLTVTHGRKVTRCHIFAYTLVLAPFALWLGFTSVGGPLYLAVSVVLNALFIAGGWQILRRSEDQAQADGYRVEKRYFRLSLYYTFLHFLALLVQHWVGGW.

Transmembrane regions (helical) follow at residues 26–46, 47–67, 98–118, 119–139, 147–167, 174–194, 220–240, 243–263, and 284–304; these read VMSL…QPVN, PFVA…SGAL, LAVG…AANW, FAAG…TIWL, IVIG…CATG, LLMF…LALF, IFAY…TSVG, LYLA…WQIL, and LSLY…WVGG.

It belongs to the UbiA prenyltransferase family. Protoheme IX farnesyltransferase subfamily. As to quaternary structure, interacts with CtaA.

It is found in the cell inner membrane. It carries out the reaction heme b + (2E,6E)-farnesyl diphosphate + H2O = Fe(II)-heme o + diphosphate. It functions in the pathway porphyrin-containing compound metabolism; heme O biosynthesis; heme O from protoheme: step 1/1. In terms of biological role, converts heme B (protoheme IX) to heme O by substitution of the vinyl group on carbon 2 of heme B porphyrin ring with a hydroxyethyl farnesyl side group. The protein is Protoheme IX farnesyltransferase of Paracoccus denitrificans (strain Pd 1222).